The sequence spans 475 residues: F-box/kelch-repeat protein At1g22040 (475 aa).

The tract at residues 1–28 (MGSVMSLSCSKRKATSQDVECSSESRKR) is disordered. The 47-residue stretch at 41 to 87 (CRLIPSLPDELSIQILARLPRICYSSVRLVSRRWRSAVSTSEVYSLR) folds into the F-box domain. Kelch repeat units follow at residues 94-140 (EEWL…KSLS), 182-228 (GLYV…VLNK), 229-279 (KLYV…AFLA), 306-350 (PFFV…VDGE), and 352-401 (YAFD…GFHG).

This chain is F-box/kelch-repeat protein At1g22040, found in Arabidopsis thaliana (Mouse-ear cress).